A 138-amino-acid polypeptide reads, in one-letter code: Putative pre-16S rRNA nuclease (138 aa).

This sequence belongs to the YqgF nuclease family.

The protein resides in the cytoplasm. Its function is as follows. Could be a nuclease involved in processing of the 5'-end of pre-16S rRNA. The protein is Putative pre-16S rRNA nuclease of Helicobacter hepaticus (strain ATCC 51449 / 3B1).